The sequence spans 805 residues: Angiotensin-converting enzyme 2 (805 aa).

The first 17 residues, 1-17 (MSGSFWLLLSFAALTAA), serve as a signal peptide directing secretion. Topologically, residues 18-740 (QSTTEELAKT…LSPPYRPPVT (723 aa)) are extracellular. Residues 19–607 (STTEELAKTF…QNRNSFVGWD (589 aa)) enclose the Peptidase M2 domain. Residues 30-41 (ETFNYEAQELSY) form an interaction with SARS S protein region. The N-linked (GlcNAc...) asparagine glycan is linked to Asn-53. Interaction with SARS S protein stretches follow at residues 82 to 84 (TYP) and 90 to 93 (DAKI). Cys-133 and Cys-141 are oxidised to a cystine. Arg-169 is a chloride binding site. The N-linked (GlcNAc...) asparagine glycan is linked to Asn-216. Substrate is bound at residue Arg-273. Asn-322 is a glycosylation site (N-linked (GlcNAc...) asparagine). Cys-344 and Cys-361 are disulfide-bonded. 345–346 (HP) serves as a coordination point for substrate. The interaction with SARS S protein stretch occupies residues 353-357 (KGDFR). A Zn(2+)-binding site is contributed by His-374. Glu-375 serves as the catalytic Proton acceptor. Residues His-378 and Glu-402 each coordinate Zn(2+). Positions 477 and 481 each coordinate chloride. His-505 acts as the Proton donor in catalysis. Tyr-515 is a substrate binding site. A disulfide bond links Cys-530 and Cys-542. Asn-546 carries N-linked (GlcNAc...) asparagine glycosylation. In terms of domain architecture, Collectrin-like spans 614 to 805 (SDQSIKVRIS…QHADDVQTSF (192 aa)). The tract at residues 652 to 659 (REYFSKVK) is essential for cleavage by ADAM17. N-linked (GlcNAc...) asparagine glycans are attached at residues Asn-660 and Asn-690. Residues 697-716 (RSEVEDAIRMSRSRINDAFR) form an essential for cleavage by TMPRSS11D and TMPRSS2 region. Residues 741–761 (IWLIVFGVVMGAIVVGIVLLI) traverse the membrane as a helical segment. At 762–805 (VSGIRNRRKNDQAGSEENPYASVDLNKGENNPGFQHADDVQTSF) the chain is on the cytoplasmic side. Residues 771–805 (NDQAGSEENPYASVDLNKGENNPGFQHADDVQTSF) are disordered. The LIR signature appears at 778–786 (ENPYASVDL). Tyr-781 is modified (phosphotyrosine). The Endocytic sorting signal signature appears at 781–784 (YASV). The SH2-binding motif lies at 781-785 (YASVD). Ser-783 carries the phosphoserine modification. The PTB signature appears at 792–795 (NPGF). Residues 803-805 (TSF) carry the PDZ-binding motif.

The protein belongs to the peptidase M2 family. Homodimer. Interacts with the catalytically active form of TMPRSS2. Interacts with SLC6A19; this interaction is essential for expression and function of SLC6A19 in intestine. Interacts with ITGA5:ITGB1. Probably interacts (via endocytic sorting signal motif) with AP2M1; the interaction is inhibited by phosphorylation of Tyr-781. Interacts (via PDZ-binding motif) with NHERF1 (via PDZ domains); the interaction may enhance ACE2 membrane residence. In terms of assembly, (Microbial infection) Interacts with SARS-CoV S protein. Requires Zn(2+) as cofactor. Chloride is required as a cofactor. Post-translationally, proteolytic cleavage by ADAM17 generates a secreted form. Also cleaved by serine proteases: TMPRSS2, TMPRSS11D and HPN/TMPRSS1. Phosphorylated. Phosphorylation at Tyr-781 probably inhibits interaction with AP2M1 and enables interactions with proteins containing SH2 domains.

The protein localises to the secreted. It localises to the cell membrane. Its subcellular location is the cytoplasm. It is found in the cell projection. The protein resides in the cilium. The protein localises to the apical cell membrane. It carries out the reaction angiotensin II + H2O = angiotensin-(1-7) + L-phenylalanine. The enzyme catalyses angiotensin I + H2O = angiotensin-(1-9) + L-leucine. Its function is as follows. Essential counter-regulatory carboxypeptidase of the renin-angiotensin hormone system that is a critical regulator of blood volume, systemic vascular resistance, and thus cardiovascular homeostasis. Converts angiotensin I to angiotensin 1-9, a nine-amino acid peptide with anti-hypertrophic effects in cardiomyocytes, and angiotensin II to angiotensin 1-7, which then acts as a beneficial vasodilator and anti-proliferation agent, counterbalancing the actions of the vasoconstrictor angiotensin II. Also removes the C-terminal residue from three other vasoactive peptides, neurotensin, kinetensin, and des-Arg bradykinin, but is not active on bradykinin. Also cleaves other biological peptides, such as apelins, casomorphins and dynorphin A. Plays an important role in amino acid transport by acting as binding partner of amino acid transporter SLC6A19 in intestine, regulating trafficking, expression on the cell surface, and its catalytic activity. Functionally, (Microbial infection) Acts as a receptor for human coronavirus SARS. In Paguma larvata (Masked palm civet), this protein is Angiotensin-converting enzyme 2 (ACE2).